A 235-amino-acid chain; its full sequence is Protein fmp52-1, mitochondrial (235 aa).

A mitochondrion-targeting transit peptide spans 1–36; the sequence is MANTALIGCTGMVGSFILNNLLAHPSVARVDTISRR.

The protein belongs to the FMP52 family.

The protein localises to the mitochondrion outer membrane. This is Protein fmp52-1, mitochondrial (fmp521) from Aspergillus oryzae (strain ATCC 42149 / RIB 40) (Yellow koji mold).